Reading from the N-terminus, the 270-residue chain is MISTLRRAVFLRRFPAVVSPIKRAFSSRIDDEFDPQIMNINELNQEMQSIFGQEPSPDGPGTMDFSELKSSKIEPLRSKNIDFRQQIEYHKSTHSSKNDSQAIEQYAKVASDMSKLTHVGIAGEAQMVDVSSKDNSKRTALACCKVILGKRVFDLVLANQMGKGDVLGVAKIAGINGAKQTSSLIPLCHNIALTHVRVDLRLNPEDFSVDIEGEASCTGKTGVEMEAMTAVSVAGLTVYDMCKAASKDISITDVRLERKTGGKSGSWSRL.

Residues 1–32 constitute a mitochondrion transit peptide; it reads MISTLRRAVFLRRFPAVVSPIKRAFSSRIDDE. Substrate contacts are provided by residues 187–189 and 225–226; these read LCH and ME. Residue Asp-240 is part of the active site.

It belongs to the MoaC family. As to quaternary structure, homohexamer. Abundantly expressed in the roots.

The protein localises to the mitochondrion matrix. The enzyme catalyses (8S)-3',8-cyclo-7,8-dihydroguanosine 5'-triphosphate = cyclic pyranopterin phosphate + diphosphate. It functions in the pathway cofactor biosynthesis; molybdopterin biosynthesis. In terms of biological role, catalyzes the conversion of (8S)-3',8-cyclo-7,8-dihydroguanosine 5'-triphosphate to cyclic pyranopterin monophosphate (cPMP). This Arabidopsis thaliana (Mouse-ear cress) protein is Cyclic pyranopterin monophosphate synthase, mitochondrial (CNX3).